The following is a 738-amino-acid chain: Wall-associated receptor kinase 4 (738 aa).

Positions 1–22 (MKVQRLFLVAIFCLSYMQLVKG) are cleaved as a signal peptide. The Extracellular segment spans residues 23–335 (QTLPRCPEKC…PKGNPEYVEW (313 aa)). Residues Asn34, Asn56, Asn109, Asn115, Asn132, Asn182, and Asn208 are each glycosylated (N-linked (GlcNAc...) asparagine). The EGF-like 1 domain maps to 232-278 (RGETCGQVGEKKCGVNGICSNSASGIGYTCKCKGGFQGNPYLQNGCQ). Disulfide bonds link Cys236–Cys250, Cys244–Cys261, Cys263–Cys277, Cys283–Cys300, Cys294–Cys309, and Cys311–Cys324. Residues 279-325 (DINECTTANPIHKHNCSGDSTCENKLGHFRCNCRSRYELNTTTNTCK) form the EGF-like 2; calcium-binding domain. N-linked (GlcNAc...) asparagine glycosylation is present at Asn293. N-linked (GlcNAc...) asparagine glycosylation occurs at Asn318. The helical transmembrane segment at 336–356 (TTIVLGTTIGFLVILLAISCI) threads the bilayer. Residues 357–738 (EHKMKNTKDT…VAILDIEAGR (382 aa)) are Cytoplasmic-facing. Thr399 is modified (phosphothreonine). A Protein kinase domain is found at 410-693 (YDENRILGQG…RVTKTKHKWS (284 aa)). Residues 416-424 (LGQGGQGTV) and Lys438 each bind ATP. At Tyr483 the chain carries Phosphotyrosine. Catalysis depends on Asp535, which acts as the Proton acceptor. A phosphothreonine mark is found at Thr569 and Thr574. A Phosphotyrosine modification is found at Tyr582.

Belongs to the protein kinase superfamily. Ser/Thr protein kinase family. Strictly expressed in siliques.

It is found in the membrane. The catalysed reaction is L-seryl-[protein] + ATP = O-phospho-L-seryl-[protein] + ADP + H(+). It catalyses the reaction L-threonyl-[protein] + ATP = O-phospho-L-threonyl-[protein] + ADP + H(+). Its function is as follows. Serine/threonine-protein kinase that may function as a signaling receptor of extracellular matrix component. Binding to pectin may have significance in the control of cell expansion, morphogenesis and development. This Arabidopsis thaliana (Mouse-ear cress) protein is Wall-associated receptor kinase 4 (WAK4).